A 193-amino-acid chain; its full sequence is Selenoprotein S A (193 aa).

The chain crosses the membrane as a helical span at residues 29–49 (WALASYGWYILFGCIILYFLI). Over residues 114–125 (IETWDRMQEGKS) the composition is skewed to basic and acidic residues. The disordered stretch occupies residues 114–193 (IETWDRMQEG…RRGPSSGGUG (80 aa)). Positions 137–153 (SPSTSASSSPSTSSSAP) are enriched in low complexity. Selenocysteine 192 is a non-standard amino acid (selenocysteine).

This sequence belongs to the selenoprotein S family.

The protein resides in the endoplasmic reticulum membrane. It localises to the cytoplasm. Functionally, involved in the degradation process of misfolded endoplasmic reticulum (ER) luminal proteins. Participates in the transfer of misfolded proteins from the ER to the cytosol, where they are destroyed by the proteasome in a ubiquitin-dependent manner. This Xenopus laevis (African clawed frog) protein is Selenoprotein S A (vimp-a).